A 145-amino-acid chain; its full sequence is MISVSGAVKRMWLLLAIVVVAVVGGLGIYRLHSIFGVHEQPTVMVKPDFDVPLFNPKRVTYEVFGPAKTAKIAYLDPDARVHRLDSVSLPWSVTVETTLPAVSVNLMAQSNADVISCRIIVNGAVKDERSETSPRALTSCQVSSG.

The chain crosses the membrane as a helical span at residues 11–31 (MWLLLAIVVVAVVGGLGIYRL).

This sequence belongs to the MmpS family.

It is found in the cell membrane. This chain is Probable transport accessory protein MmpS2 (mmpS2), found in Mycobacterium bovis (strain ATCC BAA-935 / AF2122/97).